The chain runs to 505 residues: Ookinete surface protein PIMMS43 (505 aa).

The first 24 residues, 1 to 24, serve as a signal peptide directing secretion; that stretch reads MQKRIYVSLFFLVFFLSKISVVLS. A disordered region spans residues 188–221; it reads ERRKKKLDDEQKRQKDLEDTNRKENDEEQSYKKL. The chain crosses the membrane as a helical span at residues 485–505; that stretch reads SSIYSSIKYFFLLMLFVIYIL.

Monomer. May form multimers with an unknown protein(s).

It is found in the membrane. Its function is as follows. Involved in ookinete evasion of the mosquito complement-like response, oocyst maturation, sporozoite development and infectivity. The polypeptide is Ookinete surface protein PIMMS43 (Plasmodium falciparum (isolate 3D7)).